Reading from the N-terminus, the 617-residue chain is tRNA uridine 5-carboxymethylaminomethyl modification enzyme MnmG (617 aa).

Residues 9–14 (GAGHAG), Val-120, and Thr-175 each bind FAD. An NAD(+)-binding site is contributed by 267 to 281 (GPRYCPSIEDKVVRF). Gln-364 is an FAD binding site.

It belongs to the MnmG family. As to quaternary structure, homodimer. Heterotetramer of two MnmE and two MnmG subunits. It depends on FAD as a cofactor.

It localises to the cytoplasm. In terms of biological role, NAD-binding protein involved in the addition of a carboxymethylaminomethyl (cmnm) group at the wobble position (U34) of certain tRNAs, forming tRNA-cmnm(5)s(2)U34. The chain is tRNA uridine 5-carboxymethylaminomethyl modification enzyme MnmG from Onion yellows phytoplasma (strain OY-M).